Reading from the N-terminus, the 106-residue chain is MGKLTLLLLVLLGWLQYSLWLGKNGIHDFVRVKEDVAAQEANNSTLKARNDQLFAEIDDLNGGQEAIEERARNELGMIKPGESFYRLVPDQSRRNAGTPSTQNNAQ.

Topologically, residues 1 to 3 (MGK) are cytoplasmic. Residues 4-21 (LTLLLLVLLGWLQYSLWL) traverse the membrane as a helical segment. At 22–106 (GKNGIHDFVR…GTPSTQNNAQ (85 aa)) the chain is on the periplasmic side. Positions 31–62 (RVKEDVAAQEANNSTLKARNDQLFAEIDDLNG) form a coiled coil.

It belongs to the FtsB family. As to quaternary structure, part of a complex composed of FtsB, FtsL and FtsQ.

Its subcellular location is the cell inner membrane. Functionally, essential cell division protein. May link together the upstream cell division proteins, which are predominantly cytoplasmic, with the downstream cell division proteins, which are predominantly periplasmic. The sequence is that of Cell division protein FtsB from Yersinia pseudotuberculosis serotype O:1b (strain IP 31758).